The chain runs to 367 residues: Mitogen-activated protein kinase 12 (367 aa).

Residues 27–311 (YRDLQPVGSG…AGEALAHPYF (285 aa)) form the Protein kinase domain. ATP contacts are provided by residues 33 to 41 (VGSGAYGAV) and lysine 56. Aspartate 153 acts as the Proton acceptor in catalysis. Threonine 183 carries the post-translational modification Phosphothreonine; by MAP2K3 and MAP2K6. Residues 183 to 185 (TGY) carry the TXY motif. Tyrosine 185 is modified (phosphotyrosine).

The protein belongs to the protein kinase superfamily. CMGC Ser/Thr protein kinase family. MAP kinase subfamily. Monomer. Interacts with the PDZ domain of the syntrophin SNTA1. Interacts with SH3BP5. Interacts with LIN7C, SCRIB and SYNJ2BP. Interacts with PTPN4; this interaction induces the activation of PTPN4 phosphatase activity. It depends on Mg(2+) as a cofactor. In terms of processing, dually phosphorylated on Thr-183 and Tyr-185 by MAP2K3/MKK3 and MAP2K6/MKK6, which activates the enzyme. Ubiquitinated. Ubiquitination leads to degradation by the proteasome pathway. Highly expressed in skeletal muscle and heart.

The protein resides in the cytoplasm. It localises to the nucleus. Its subcellular location is the mitochondrion. The catalysed reaction is L-seryl-[protein] + ATP = O-phospho-L-seryl-[protein] + ADP + H(+). The enzyme catalyses L-threonyl-[protein] + ATP = O-phospho-L-threonyl-[protein] + ADP + H(+). Its activity is regulated as follows. Activated by phosphorylation on threonine and tyrosine. MAP2K3/MKK3 and MAP2K6/MKK6 are both essential for the activation of MAPK12 induced by environmental stress, whereas MAP2K6/MKK6 is the major MAPK12 activator in response to TNF-alpha. Its function is as follows. Serine/threonine kinase which acts as an essential component of the MAP kinase signal transduction pathway. MAPK12 is one of the four p38 MAPKs which play an important role in the cascades of cellular responses evoked by extracellular stimuli such as pro-inflammatory cytokines or physical stress leading to direct activation of transcription factors such as ELK1 and ATF2. Accordingly, p38 MAPKs phosphorylate a broad range of proteins and it has been estimated that they may have approximately 200 to 300 substrates each. Some of the targets are downstream kinases such as MAPKAPK2, which are activated through phosphorylation and further phosphorylate additional targets. Plays a role in myoblast differentiation and also in the down-regulation of cyclin D1 in response to hypoxia in adrenal cells suggesting MAPK12 may inhibit cell proliferation while promoting differentiation. Phosphorylates DLG1. Following osmotic shock, MAPK12 in the cell nucleus increases its association with nuclear DLG1, thereby causing dissociation of DLG1-SFPQ complexes. This function is independent of its catalytic activity and could affect mRNA processing and/or gene transcription to aid cell adaptation to osmolarity changes in the environment. Regulates UV-induced checkpoint signaling and repair of UV-induced DNA damage and G2 arrest after gamma-radiation exposure. MAPK12 is involved in the regulation of SLC2A1 expression and basal glucose uptake in L6 myotubes; and negatively regulates SLC2A4 expression and contraction-mediated glucose uptake in adult skeletal muscle. C-Jun (JUN) phosphorylation is stimulated by MAPK14 and inhibited by MAPK12, leading to a distinct AP-1 regulation. MAPK12 is required for the normal kinetochore localization of PLK1, prevents chromosomal instability and supports mitotic cell viability. MAPK12-signaling is also positively regulating the expansion of transient amplifying myogenic precursor cells during muscle growth and regeneration. The chain is Mitogen-activated protein kinase 12 (MAPK12) from Homo sapiens (Human).